The chain runs to 220 residues: Putative tyrosine-protein phosphatase 1 (220 aa).

One can recognise a Tyrosine-protein phosphatase domain in the interval 67 to 218; the sequence is FKVPLNAELF…LLARKHVRGQ (152 aa).

Belongs to the protein-tyrosine phosphatase family. Non-receptor class CDC14 subfamily.

It catalyses the reaction O-phospho-L-tyrosyl-[protein] + H2O = L-tyrosyl-[protein] + phosphate. Its function is as follows. Could be inactive as the active site cysteine is modified to tryptophan. This chain is Putative tyrosine-protein phosphatase 1 (PTP-1), found in Orgyia pseudotsugata multicapsid polyhedrosis virus (OpMNPV).